Consider the following 326-residue polypeptide: tRNA-cytidine(32) 2-sulfurtransferase (326 aa).

Positions 63 to 68 match the PP-loop motif motif; the sequence is SGGKDS. Residues Cys138, Cys141, and Cys229 each contribute to the [4Fe-4S] cluster site.

The protein belongs to the TtcA family. Homodimer. It depends on Mg(2+) as a cofactor. Requires [4Fe-4S] cluster as cofactor.

It localises to the cytoplasm. It carries out the reaction cytidine(32) in tRNA + S-sulfanyl-L-cysteinyl-[cysteine desulfurase] + AH2 + ATP = 2-thiocytidine(32) in tRNA + L-cysteinyl-[cysteine desulfurase] + A + AMP + diphosphate + H(+). It participates in tRNA modification. Its function is as follows. Catalyzes the ATP-dependent 2-thiolation of cytidine in position 32 of tRNA, to form 2-thiocytidine (s(2)C32). The sulfur atoms are provided by the cysteine/cysteine desulfurase (IscS) system. This chain is tRNA-cytidine(32) 2-sulfurtransferase, found in Leptothrix cholodnii (strain ATCC 51168 / LMG 8142 / SP-6) (Leptothrix discophora (strain SP-6)).